The chain runs to 447 residues: Tektin-4 (447 aa).

Coiled-coil stretches lie at residues 69-144 (ADRD…ALDA) and 304-423 (FGRR…TNSL). The segment covering 72-81 (DQSERQRHES) has biased composition (basic and acidic residues). The interval 72–104 (DQSERQRHESQQLAAETEALAQRTQQDSTRKVG) is disordered. Residues 82-97 (QQLAAETEALAQRTQQ) show a composition bias toward low complexity.

The protein belongs to the tektin family. As to quaternary structure, microtubule inner protein component of sperm flagellar doublet microtubules. Post-translationally, ubiquitinated, leading to its degradation. Deubiquitinated by USP16, promoting its stability. In terms of tissue distribution, expressed in trachea multiciliated cells.

The protein localises to the cytoplasm. The protein resides in the cytoskeleton. It localises to the cilium axoneme. It is found in the flagellum axoneme. In terms of biological role, microtubule inner protein (MIP) part of the dynein-decorated doublet microtubules (DMTs) in cilia and flagellar axoneme. Forms filamentous polymers in the walls of ciliary and flagellar microtubules. Contributes to normal sperm motility. The polypeptide is Tektin-4 (TEKT4) (Bos taurus (Bovine)).